Consider the following 265-residue polypeptide: Hydroxyethylthiazole kinase (265 aa).

M43 lines the substrate pocket. 2 residues coordinate ATP: K118 and T165. G192 provides a ligand contact to substrate.

The protein belongs to the Thz kinase family. It depends on Mg(2+) as a cofactor.

The enzyme catalyses 5-(2-hydroxyethyl)-4-methylthiazole + ATP = 4-methyl-5-(2-phosphooxyethyl)-thiazole + ADP + H(+). It participates in cofactor biosynthesis; thiamine diphosphate biosynthesis; 4-methyl-5-(2-phosphoethyl)-thiazole from 5-(2-hydroxyethyl)-4-methylthiazole: step 1/1. Catalyzes the phosphorylation of the hydroxyl group of 4-methyl-5-beta-hydroxyethylthiazole (THZ). This is Hydroxyethylthiazole kinase from Pyrococcus abyssi (strain GE5 / Orsay).